A 145-amino-acid chain; its full sequence is Beta sliding clamp (145 aa).

This sequence belongs to the beta sliding clamp family. As to quaternary structure, forms a ring-shaped head-to-tail homodimer around DNA which binds and tethers DNA polymerases and other proteins to the DNA. The DNA replisome complex has a single clamp-loading complex (3 tau and 1 each of delta, delta', psi and chi subunits) which binds 3 Pol III cores (1 core on the leading strand and 2 on the lagging strand) each with a beta sliding clamp dimer. Additional proteins in the replisome are other copies of gamma, psi and chi, Ssb, DNA helicase and RNA primase.

The protein resides in the cytoplasm. Its function is as follows. Confers DNA tethering and processivity to DNA polymerases and other proteins. Acts as a clamp, forming a ring around DNA (a reaction catalyzed by the clamp-loading complex) which diffuses in an ATP-independent manner freely and bidirectionally along dsDNA. Initially characterized for its ability to contact the catalytic subunit of DNA polymerase III (Pol III), a complex, multichain enzyme responsible for most of the replicative synthesis in bacteria; Pol III exhibits 3'-5' exonuclease proofreading activity. The beta chain is required for initiation of replication as well as for processivity of DNA replication. The polypeptide is Beta sliding clamp (dnaN) (Vibrio harveyi (Beneckea harveyi)).